Reading from the N-terminus, the 470-residue chain is Glutamate--tRNA ligase (470 aa).

Positions 9 to 19 (PSPTGFLHVGG) match the 'HIGH' region motif. Positions 236–240 (RLSKR) match the 'KMSKS' region motif. Residue Lys-239 participates in ATP binding.

It belongs to the class-I aminoacyl-tRNA synthetase family. Glutamate--tRNA ligase type 1 subfamily. Monomer.

It localises to the cytoplasm. The catalysed reaction is tRNA(Glu) + L-glutamate + ATP = L-glutamyl-tRNA(Glu) + AMP + diphosphate. Functionally, catalyzes the attachment of glutamate to tRNA(Glu) in a two-step reaction: glutamate is first activated by ATP to form Glu-AMP and then transferred to the acceptor end of tRNA(Glu). This chain is Glutamate--tRNA ligase, found in Legionella pneumophila subsp. pneumophila (strain Philadelphia 1 / ATCC 33152 / DSM 7513).